Reading from the N-terminus, the 145-residue chain is Ribonuclease H (145 aa).

The region spanning 1–141 is the RNase H type-1 domain; it reads MQEVELFTDG…VDELANQAMD (141 aa). Mg(2+)-binding residues include Asp-9, Glu-47, Asp-69, and Asp-133.

The protein belongs to the RNase H family. In terms of assembly, monomer. The cofactor is Mg(2+).

It localises to the cytoplasm. It catalyses the reaction Endonucleolytic cleavage to 5'-phosphomonoester.. Its function is as follows. Endonuclease that specifically degrades the RNA of RNA-DNA hybrids. The protein is Ribonuclease H of Hydrogenovibrio crunogenus (strain DSM 25203 / XCL-2) (Thiomicrospira crunogena).